The chain runs to 553 residues: Heterochromatin protein 1-binding protein 3 (553 aa).

Ala-2 is subject to N-acetylalanine. At Ser-6 the chain carries Phosphoserine. Disordered stretches follow at residues 29–134 and 140–159; these read KLGE…KTIP and SASQ…SPRP. Phosphothreonine is present on Thr-51. A compositionally biased stretch (acidic residues) spans 60-71; sequence GEEEKPEPDISS. A Glycyl lysine isopeptide (Lys-Gly) (interchain with G-Cter in SUMO2) cross-link involves residue Lys-64. Thr-85 is subject to Phosphothreonine. The segment covering 94-127 has biased composition (basic and acidic residues); that stretch reads EQPKGEPENEEKEENKSSEETKKDEKDQSKEKEK. A Glycyl lysine isopeptide (Lys-Gly) (interchain with G-Cter in SUMO2) cross-link involves residue Lys-97. Polar residues predominate over residues 140 to 154; sequence SASQLARAQKQTPMA. Ser-142, Ser-155, and Ser-156 each carry phosphoserine. Positions 157–232 constitute an H15 1 domain; sequence PRPKMDAILT…GASGSFVVVQ (76 aa). Lys-190 is modified (N6-acetyllysine). The interval 230-255 is disordered; the sequence is VVQKSRKTPQKSRNRKNRSSAVDPEP. Residues 233–247 are compositionally biased toward basic residues; sequence KSRKTPQKSRNRKNR. Ser-248 and Ser-249 each carry phosphoserine. Positions 255 to 259 match the PxVxL motif motif; that stretch reads PQVKL. H15 domains are found at residues 255 to 330 and 337 to 413; these read PQVK…QLKK and LGGS…QLCF. Lys-258 participates in a covalent cross-link: Glycyl lysine isopeptide (Lys-Gly) (interchain with G-Cter in SUMO2). Residues 422-553 form a disordered region; it reads LFPKKEPDDS…TMKKSFRVKK (132 aa). Over residues 430–450 the composition is skewed to acidic residues; it reads DSRDEDEDEDESSEEDSEDEE. Phosphoserine occurs at positions 441, 442, and 446. Positions 489–510 are enriched in basic residues; sequence GKARPLPKKAPPKAKTPAKKTR. Residues 517-527 are compositionally biased toward low complexity; it reads KKPSGGSSKKP. A compositionally biased stretch (basic residues) spans 543–553; sequence STMKKSFRVKK.

As to quaternary structure, interacts (via PxVxL motif) with CBX5 (via Trp-174).

It localises to the nucleus. The protein localises to the chromosome. Functionally, component of heterochromatin that maintains heterochromatin integrity during G1/S progression and regulates the duration of G1 phase to critically influence cell proliferative capacity. Mediates chromatin condensation during hypoxia, leading to increased tumor cell viability, radio-resistance, chemo-resistance and self-renewal. In Homo sapiens (Human), this protein is Heterochromatin protein 1-binding protein 3 (HP1BP3).